We begin with the raw amino-acid sequence, 172 residues long: MDLKQYVSEVKDWPSAGVSFKDITTIMDNGEAYGYATDQIVEYAKEKNIDIVVGPEARGFIIGCPVAYSMGIGFAPVRKEGKLPREVIRYEYNLEYGTNVLTMHKDAIKPGQRVLITDDLLATGGTIEAAIKLVEQLGGIVVGIAFIIELKYLNGIDKIKDYDVMSLISYDE.

It belongs to the purine/pyrimidine phosphoribosyltransferase family. As to quaternary structure, homodimer.

It localises to the cytoplasm. The catalysed reaction is AMP + diphosphate = 5-phospho-alpha-D-ribose 1-diphosphate + adenine. The protein operates within purine metabolism; AMP biosynthesis via salvage pathway; AMP from adenine: step 1/1. Catalyzes a salvage reaction resulting in the formation of AMP, that is energically less costly than de novo synthesis. In Staphylococcus epidermidis (strain ATCC 35984 / DSM 28319 / BCRC 17069 / CCUG 31568 / BM 3577 / RP62A), this protein is Adenine phosphoribosyltransferase.